The chain runs to 229 residues: Interleukin-27 subunit beta (229 aa).

Residues M1 to G20 form the signal peptide. Fibronectin type-III domains are found at residues P24–D130 and P131–L227. Residues N55 and N105 are each glycosylated (N-linked (GlcNAc...) asparagine).

The protein belongs to the type I cytokine receptor family. Type 3 subfamily. As to quaternary structure, heterodimer with IL27/IL27A; not disulfide-linked. This heterodimer is known as interleukin IL-27. Heterodimer with IL12A; not disulfide-linked. This heterodimer is known as interleukin IL-35. Interacts with SQSTM1.

The protein localises to the secreted. In terms of biological role, associates with IL27 to form the IL-27 interleukin, a heterodimeric cytokine which functions in innate immunity. IL-27 has pro- and anti-inflammatory properties, that can regulate T-helper cell development, suppress T-cell proliferation, stimulate cytotoxic T-cell activity, induce isotype switching in B-cells, and that has diverse effects on innate immune cells. Among its target cells are CD4 T-helper cells which can differentiate in type 1 effector cells (TH1), type 2 effector cells (TH2) and IL17 producing helper T-cells (TH17). It drives rapid clonal expansion of naive but not memory CD4 T-cells. It also strongly synergizes with IL-12 to trigger interferon-gamma/IFN-gamma production of naive CD4 T-cells, binds to the cytokine receptor WSX-1/TCCR. Another important role of IL-27 is its antitumor activity as well as its antiangiogenic activity with activation of production of antiangiogenic chemokines. This chain is Interleukin-27 subunit beta (EBI3), found in Homo sapiens (Human).